The chain runs to 499 residues: Neuropeptide CCHamide-1 receptor (499 aa).

At 1–85 (MIANLVSMET…GRRPETYIVP (85 aa)) the chain is on the extracellular side. N-linked (GlcNAc...) asparagine glycans are attached at residues N33 and N61. Residues 86 to 106 (ILFALIFVVGVLGNGTLIVVF) form a helical membrane-spanning segment. Residues 107–117 (LSVRQMRNVPN) are Cytoplasmic-facing. A helical membrane pass occupies residues 118–138 (TYILSLALADLLVIITTVPLA). Residues 139-162 (STVYTVEYWPYGSFLCSLSEFMKD) lie on the Extracellular side of the membrane. Cysteines 154 and 240 form a disulfide. A helical membrane pass occupies residues 163-183 (VSIGVSVFTLTALSGDRYFAI). The Cytoplasmic portion of the chain corresponds to 184-203 (VDPLRKFHAHGGGRRATRMT). A helical transmembrane segment spans residues 204 to 224 (LATAVSIWLLAILCGLPALIG). The Extracellular segment spans residues 225–259 (SNLKHLGINEKSIVICYPYPEEWGINYAKSMVLLH). The chain crosses the membrane as a helical span at residues 260 to 280 (FLVYYAIPLVVIAVFYVLIAL). Residues 281-309 (HLMYSASVPGEIQGAVRQVRARRKVAVTV) lie on the Cytoplasmic side of the membrane. The chain crosses the membrane as a helical span at residues 310–330 (LAFVVIFGICFLPYHVFFLWF). Over 331-348 (YFWPTAQDDYNAFWHVLR) the chain is Extracellular. Residues 349 to 369 (IVAYCMSFANSCANPVALYFV) form a helical membrane-spanning segment. Residues 370–499 (SGAFRKHFNR…PAKFQESLLN (130 aa)) lie on the Cytoplasmic side of the membrane.

The protein belongs to the G-protein coupled receptor 1 family. Low levels in larval brain and gut with higher levels in adult brain and gut. In the brain expression is widely distributed, including strong expression in the mushroom bodies. Expressed weakly in s-LNv (small ventral lateral neurons) and strongly in l-LNv (large ventral lateral neurons), but not in other clock neurons.

Its subcellular location is the cell membrane. Its function is as follows. Receptor for the neuropeptide CCHamide-1. Plays a role in the modulation of starvation-induced olfactory behavior where starved flies show increased responsiveness to food odorants, repellants and pheromones. Contributes to regulation of sleep latency (the time required to fall asleep), amount of sleep and depth of sleep (arousability). Involved in modulation of PDP1 and PDF levels in s-LNv (small ventral lateral neurons) clock neurons in response to CCHa1 released by DN1a (anterior dorsal neurons 1) clock neurons, to regulate morning activity. In a subset of dopaminergic cells in the protocerebral anterior medial (PAM) cluster involved in suppressing arousability in response to CCHa1 secreted by gut enteroendocrine cells. In Drosophila melanogaster (Fruit fly), this protein is Neuropeptide CCHamide-1 receptor.